Consider the following 368-residue polypeptide: Galactoside 2-alpha-L-fucosyltransferase Sec1 (368 aa).

At Met1–Cys20 the chain is on the cytoplasmic side. A helical; Signal-anchor for type II membrane protein transmembrane segment spans residues Pro21–Cys41. At His42–Leu368 the chain is on the lumenal side. N-linked (GlcNAc...) asparagine glycans are attached at residues Asn195, Asn289, and Asn315.

This sequence belongs to the glycosyltransferase 11 family.

The protein localises to the golgi apparatus. Its subcellular location is the golgi stack membrane. It carries out the reaction a ganglioside GM1 + GDP-beta-L-fucose = a ganglioside Fuc-GM1 + GDP + H(+). The protein operates within protein modification; protein glycosylation. Its function is as follows. Catalyzes the transfer of alpha 1,2-linked fucose to ganglioside GM1 and galacto-N-biose. The protein is Galactoside 2-alpha-L-fucosyltransferase Sec1 of Mus musculus (Mouse).